The primary structure comprises 165 residues: Chorismate pyruvate-lyase (165 aa).

Residues Met-35, Arg-77, Leu-115, and Glu-156 each coordinate substrate.

Belongs to the UbiC family. As to quaternary structure, monomer.

Its subcellular location is the cytoplasm. The enzyme catalyses chorismate = 4-hydroxybenzoate + pyruvate. Its pathway is cofactor biosynthesis; ubiquinone biosynthesis. Removes the pyruvyl group from chorismate, with concomitant aromatization of the ring, to provide 4-hydroxybenzoate (4HB) for the ubiquinone pathway. The sequence is that of Chorismate pyruvate-lyase from Shigella boydii serotype 18 (strain CDC 3083-94 / BS512).